The chain runs to 302 residues: Sulfate adenylyltransferase subunit 2 (302 aa).

It belongs to the PAPS reductase family. CysD subfamily. As to quaternary structure, heterodimer composed of CysD, the smaller subunit, and CysN.

It carries out the reaction sulfate + ATP + H(+) = adenosine 5'-phosphosulfate + diphosphate. It participates in sulfur metabolism; hydrogen sulfide biosynthesis; sulfite from sulfate: step 1/3. Functionally, with CysN forms the ATP sulfurylase (ATPS) that catalyzes the adenylation of sulfate producing adenosine 5'-phosphosulfate (APS) and diphosphate, the first enzymatic step in sulfur assimilation pathway. APS synthesis involves the formation of a high-energy phosphoric-sulfuric acid anhydride bond driven by GTP hydrolysis by CysN coupled to ATP hydrolysis by CysD. This Bacteroides thetaiotaomicron (strain ATCC 29148 / DSM 2079 / JCM 5827 / CCUG 10774 / NCTC 10582 / VPI-5482 / E50) protein is Sulfate adenylyltransferase subunit 2.